A 372-amino-acid chain; its full sequence is N-methyl-L-tryptophan oxidase (372 aa).

4–34 serves as a coordination point for FAD; that stretch reads DLIIIGSGSVGAAAGYYATRAGLNVLMTDAH. Cysteine 308 bears the S-8alpha-FAD cysteine mark.

The protein belongs to the MSOX/MTOX family. MTOX subfamily. As to quaternary structure, monomer. FAD serves as cofactor.

It carries out the reaction N(alpha)-methyl-L-tryptophan + O2 + H2O = L-tryptophan + formaldehyde + H2O2. Functionally, catalyzes the oxidative demethylation of N-methyl-L-tryptophan. This is N-methyl-L-tryptophan oxidase from Shigella dysenteriae serotype 1 (strain Sd197).